Reading from the N-terminus, the 258-residue chain is 5-oxoprolinase subunit A (258 aa).

The protein belongs to the LamB/PxpA family. In terms of assembly, forms a complex composed of PxpA, PxpB and PxpC.

It catalyses the reaction 5-oxo-L-proline + ATP + 2 H2O = L-glutamate + ADP + phosphate + H(+). Functionally, catalyzes the cleavage of 5-oxoproline to form L-glutamate coupled to the hydrolysis of ATP to ADP and inorganic phosphate. The protein is 5-oxoprolinase subunit A of Deinococcus radiodurans (strain ATCC 13939 / DSM 20539 / JCM 16871 / CCUG 27074 / LMG 4051 / NBRC 15346 / NCIMB 9279 / VKM B-1422 / R1).